The following is a 283-amino-acid chain: ATP phosphoribosyltransferase (283 aa).

This sequence belongs to the ATP phosphoribosyltransferase family. Long subfamily. Mg(2+) serves as cofactor.

It is found in the cytoplasm. It catalyses the reaction 1-(5-phospho-beta-D-ribosyl)-ATP + diphosphate = 5-phospho-alpha-D-ribose 1-diphosphate + ATP. It participates in amino-acid biosynthesis; L-histidine biosynthesis; L-histidine from 5-phospho-alpha-D-ribose 1-diphosphate: step 1/9. Feedback inhibited by histidine. Its function is as follows. Catalyzes the condensation of ATP and 5-phosphoribose 1-diphosphate to form N'-(5'-phosphoribosyl)-ATP (PR-ATP). Has a crucial role in the pathway because the rate of histidine biosynthesis seems to be controlled primarily by regulation of HisG enzymatic activity. This Nocardia farcinica (strain IFM 10152) protein is ATP phosphoribosyltransferase.